Consider the following 425-residue polypeptide: MNTLNDSLTAFDPDIAALIDGELRRQESGLEMIASENYAPLAVMQAQGSVLTNKYAEGYPGRRYYGGCEFVDGVEQLAIDRVKALFGAEYANVQPHSGATANAATMHALLNPGDTILGLSLAHGGHLTHGMRINFSGKLYHATAYEVSKEDYLVDMDAVAEAARTHRPKMIIAGWSAYPRQLDFARFRAIADEVDAVLMVDMAHFAGLVAAGVHPSPVPHAHVVTSTTHKTLGGPRGGIILCNDPAIAKKINSAVFPGQQGGPLGHVIAAKATAFKMAAQPEFAQRQQRCLDGARILAGRLTQPDVAERGIAVLTGGTDVHLVLVDLRDAELDGQQAEDRLAAVDITVNRNAVPFDPRPPMITSGLRIGTPALAARGFSHNDFRAVADLIAAALTATNDDQLGPLRAQVQRLAARYPLYPELHRT.

(6S)-5,6,7,8-tetrahydrofolate-binding positions include leucine 121 and 125-127 (GHL). The residue at position 230 (lysine 230) is an N6-(pyridoxal phosphate)lysine.

Belongs to the SHMT family. As to quaternary structure, homodimer. Pyridoxal 5'-phosphate serves as cofactor.

The protein resides in the cytoplasm. It carries out the reaction (6R)-5,10-methylene-5,6,7,8-tetrahydrofolate + glycine + H2O = (6S)-5,6,7,8-tetrahydrofolate + L-serine. The protein operates within one-carbon metabolism; tetrahydrofolate interconversion. It participates in amino-acid biosynthesis; glycine biosynthesis; glycine from L-serine: step 1/1. Catalyzes the reversible interconversion of serine and glycine with tetrahydrofolate (THF) serving as the one-carbon carrier. This reaction serves as the major source of one-carbon groups required for the biosynthesis of purines, thymidylate, methionine, and other important biomolecules. Also exhibits THF-independent aldolase activity toward beta-hydroxyamino acids, producing glycine and aldehydes, via a retro-aldol mechanism. The protein is Serine hydroxymethyltransferase 2 of Mycobacterium bovis (strain ATCC BAA-935 / AF2122/97).